We begin with the raw amino-acid sequence, 177 residues long: Translationally-controlled tumor protein homolog (177 aa).

Residues 1-177 (MIIYRDLFSG…IKQGLVVEKC (177 aa)) enclose the TCTP domain.

The protein belongs to the TCTP family.

It is found in the cytoplasm. Functionally, involved in calcium binding and microtubule stabilization. The protein is Translationally-controlled tumor protein homolog of Trichinella pseudospiralis (Parasitic roundworm).